The following is a 113-amino-acid chain: Ribonuclease P protein component (113 aa).

Residues 1–10 are compositionally biased toward basic residues; the sequence is MLPTRHRMRT. The interval 1-23 is disordered; that stretch reads MLPTRHRMRTSAHFSTTVRSGAR.

The protein belongs to the RnpA family. In terms of assembly, consists of a catalytic RNA component (M1 or rnpB) and a protein subunit.

The enzyme catalyses Endonucleolytic cleavage of RNA, removing 5'-extranucleotides from tRNA precursor.. Functionally, RNaseP catalyzes the removal of the 5'-leader sequence from pre-tRNA to produce the mature 5'-terminus. It can also cleave other RNA substrates such as 4.5S RNA. The protein component plays an auxiliary but essential role in vivo by binding to the 5'-leader sequence and broadening the substrate specificity of the ribozyme. In Kocuria rhizophila (strain ATCC 9341 / DSM 348 / NBRC 103217 / DC2201), this protein is Ribonuclease P protein component.